We begin with the raw amino-acid sequence, 226 residues long: Deoxyribose-phosphate aldolase (226 aa).

The active-site Proton donor/acceptor is the Asp95. Lys157 serves as the catalytic Schiff-base intermediate with acetaldehyde. Lys186 functions as the Proton donor/acceptor in the catalytic mechanism.

It belongs to the DeoC/FbaB aldolase family. DeoC type 1 subfamily.

The protein localises to the cytoplasm. It catalyses the reaction 2-deoxy-D-ribose 5-phosphate = D-glyceraldehyde 3-phosphate + acetaldehyde. Its pathway is carbohydrate degradation; 2-deoxy-D-ribose 1-phosphate degradation; D-glyceraldehyde 3-phosphate and acetaldehyde from 2-deoxy-alpha-D-ribose 1-phosphate: step 2/2. With respect to regulation, partially inhibited by acetaldehyde. After incubation for 2, 4 and 6 hours in 300 mM acetaldehyde at 25 degrees Celsius, retains approximately 61.32%, 42.33% and 34.73% of the initial 2-deoxy-D-ribose-5-phosphate (DR5P) cleavage activity, respectively. Functionally, catalyzes a reversible aldol reaction between acetaldehyde and D-glyceraldehyde 3-phosphate to generate 2-deoxy-D-ribose 5-phosphate. In vitro, DERA can catalyze the aldol condensation of chloroacetaldehyde (CHAD) and acetaldehyde (ACD), yielding (S)-4-chloro-3-hydroxybutanal ((S)-CHB), which can combine with another aldehyde to form (3R,5S)-6-chloro-2,4,6-trideoxyhexapyranose (CTeHP), a key intermediate for statin drugs. This is Deoxyribose-phosphate aldolase from Pseudomonas syringae pv. syringae (strain B728a).